We begin with the raw amino-acid sequence, 183 residues long: Ribosome-recycling factor (183 aa).

The protein belongs to the RRF family.

It is found in the cytoplasm. Functionally, responsible for the release of ribosomes from messenger RNA at the termination of protein biosynthesis. May increase the efficiency of translation by recycling ribosomes from one round of translation to another. The polypeptide is Ribosome-recycling factor (Buchnera aphidicola subsp. Baizongia pistaciae (strain Bp)).